The following is a 363-amino-acid chain: Ribosome-binding ATPase YchF (363 aa).

The OBG-type G domain occupies 3-256 (FKCGIVGLPN…LEDEEKVDFL (254 aa)). 12 to 17 (NVGKST) is an ATP binding site. Mg(2+) is bound by residues Ser16 and Thr36. The TGS domain maps to 278–361 (NLQTYFTAGV…QDGDVMHFRF (84 aa)).

Belongs to the TRAFAC class OBG-HflX-like GTPase superfamily. OBG GTPase family. YchF/OLA1 subfamily. Mg(2+) is required as a cofactor.

ATPase that binds to both the 70S ribosome and the 50S ribosomal subunit in a nucleotide-independent manner. This Haemophilus ducreyi (strain 35000HP / ATCC 700724) protein is Ribosome-binding ATPase YchF.